The sequence spans 313 residues: Phosphoenolpyruvate phosphomutase (313 aa).

Residue D69 is the Nucleophile of the active site.

The protein belongs to the isocitrate lyase/PEP mutase superfamily. PEP mutase family.

It carries out the reaction phosphoenolpyruvate + H(+) = 3-phosphonopyruvate. The protein operates within secondary metabolite biosynthesis; bialaphos biosynthesis. Formation of a carbon-phosphorus bond by converting phosphoenolpyruvate (PEP) to phosphonopyruvate (P-Pyr). In Streptomyces hygroscopicus, this protein is Phosphoenolpyruvate phosphomutase (bcpB).